Here is a 411-residue protein sequence, read N- to C-terminus: Na(+)-translocating NADH-quinone reductase subunit B (411 aa).

3 helical membrane passes run 56 to 76 (MMIT…YNVG), 120 to 140 (ALGA…CTIW), and 166 to 186 (IVPP…GIIV). Residue T233 is modified to FMN phosphoryl threonine. The next 5 helical transmembrane spans lie at 272-292 (VSTL…IAAW), 294-314 (IIAG…LIGS), 319-339 (MFSM…GMVF), 348-368 (SFTN…AVLI), and 378-398 (GMML…YIVV).

This sequence belongs to the NqrB/RnfD family. In terms of assembly, composed of six subunits; NqrA, NqrB, NqrC, NqrD, NqrE and NqrF. Requires FMN as cofactor.

The protein resides in the cell inner membrane. The enzyme catalyses a ubiquinone + n Na(+)(in) + NADH + H(+) = a ubiquinol + n Na(+)(out) + NAD(+). Its function is as follows. NQR complex catalyzes the reduction of ubiquinone-1 to ubiquinol by two successive reactions, coupled with the transport of Na(+) ions from the cytoplasm to the periplasm. NqrA to NqrE are probably involved in the second step, the conversion of ubisemiquinone to ubiquinol. This chain is Na(+)-translocating NADH-quinone reductase subunit B, found in Haemophilus influenzae (strain 86-028NP).